The primary structure comprises 108 residues: Holo-[acyl-carrier-protein] synthase (108 aa).

Positions 9 and 52 each coordinate Mg(2+).

This sequence belongs to the P-Pant transferase superfamily. AcpS family. Mg(2+) is required as a cofactor.

It is found in the cytoplasm. The catalysed reaction is apo-[ACP] + CoA = holo-[ACP] + adenosine 3',5'-bisphosphate + H(+). Its function is as follows. Transfers the 4'-phosphopantetheine moiety from coenzyme A to a Ser of acyl-carrier-protein. The chain is Holo-[acyl-carrier-protein] synthase from Coprothermobacter proteolyticus (strain ATCC 35245 / DSM 5265 / OCM 4 / BT).